We begin with the raw amino-acid sequence, 99 residues long: Aspartyl/glutamyl-tRNA(Asn/Gln) amidotransferase subunit C (99 aa).

Belongs to the GatC family. As to quaternary structure, heterotrimer of A, B and C subunits.

The enzyme catalyses L-glutamyl-tRNA(Gln) + L-glutamine + ATP + H2O = L-glutaminyl-tRNA(Gln) + L-glutamate + ADP + phosphate + H(+). It catalyses the reaction L-aspartyl-tRNA(Asn) + L-glutamine + ATP + H2O = L-asparaginyl-tRNA(Asn) + L-glutamate + ADP + phosphate + 2 H(+). Allows the formation of correctly charged Asn-tRNA(Asn) or Gln-tRNA(Gln) through the transamidation of misacylated Asp-tRNA(Asn) or Glu-tRNA(Gln) in organisms which lack either or both of asparaginyl-tRNA or glutaminyl-tRNA synthetases. The reaction takes place in the presence of glutamine and ATP through an activated phospho-Asp-tRNA(Asn) or phospho-Glu-tRNA(Gln). The protein is Aspartyl/glutamyl-tRNA(Asn/Gln) amidotransferase subunit C of Sulfurihydrogenibium sp. (strain YO3AOP1).